A 181-amino-acid polypeptide reads, in one-letter code: ATP synthase subunit delta (181 aa).

This sequence belongs to the ATPase delta chain family. F-type ATPases have 2 components, F(1) - the catalytic core - and F(0) - the membrane proton channel. F(1) has five subunits: alpha(3), beta(3), gamma(1), delta(1), epsilon(1). F(0) has three main subunits: a(1), b(2) and c(10-14). The alpha and beta chains form an alternating ring which encloses part of the gamma chain. F(1) is attached to F(0) by a central stalk formed by the gamma and epsilon chains, while a peripheral stalk is formed by the delta and b chains.

The protein resides in the cell membrane. F(1)F(0) ATP synthase produces ATP from ADP in the presence of a proton or sodium gradient. F-type ATPases consist of two structural domains, F(1) containing the extramembraneous catalytic core and F(0) containing the membrane proton channel, linked together by a central stalk and a peripheral stalk. During catalysis, ATP synthesis in the catalytic domain of F(1) is coupled via a rotary mechanism of the central stalk subunits to proton translocation. Its function is as follows. This protein is part of the stalk that links CF(0) to CF(1). It either transmits conformational changes from CF(0) to CF(1) or is implicated in proton conduction. In Lacticaseibacillus casei (strain BL23) (Lactobacillus casei), this protein is ATP synthase subunit delta.